The primary structure comprises 993 residues: Lateral signaling target protein 2 homolog (993 aa).

4 disordered regions span residues 340-449 (DQRN…DTTD), 494-623 (DGYG…TVVQ), 759-813 (GARH…GDQE), and 825-902 (AVNE…PPAW). Low complexity predominate over residues 343–360 (NNNNNINNNSSSSSNSNS). The span at 372-405 (RSPSMLSLSTASPTPSHSIGSTFSAATSSTNPPV) shows a compositional bias: polar residues. The span at 409–448 (DGDDADDDDDGDDDDEDDDDDVDDDLVGNDDSDDDDDDTT) shows a compositional bias: acidic residues. 2 positions are modified to phosphoserine: Ser-525 and Ser-526. The segment covering 535–549 (SHNNTTTIKSPDSDG) has biased composition (polar residues). Over residues 559-608 (SRQRHSHHHHRHHHHHHRHSSHSSHSHHHQHQQHHSQPHPHRTTRSGRKR) the composition is skewed to basic residues. Low complexity predominate over residues 759–801 (GARHSAGASMQRNHTTIDNNNSTSSSPPDATITTTTTTTTTRS). Residue Ser-808 is modified to Phosphoserine. Composition is skewed to low complexity over residues 842-862 (SNTPSSASSSATSSSSEQNSP) and 884-896 (TTATTTTTTGTGT). The FYVE-type zinc-finger motif lies at 905-965 (DGKAPRCMSC…VCRDCYAREI (61 aa)). Zn(2+)-binding residues include Cys-911, Cys-914, Cys-927, Cys-930, Cys-935, Cys-938, Cys-957, and Cys-960. The tract at residues 968–993 (SGGGGGGVVQMQRQQAANRPQTASAS) is disordered. Over residues 978–993 (MQRQQAANRPQTASAS) the composition is skewed to polar residues.

Belongs to the lst-2 family.

Negative regulator of epidermal growth factor receptor (EGFR) signaling. The sequence is that of Lateral signaling target protein 2 homolog from Drosophila willistoni (Fruit fly).